The sequence spans 398 residues: 2,3-bisphosphoglycerate-independent phosphoglycerate mutase (398 aa).

The protein belongs to the BPG-independent phosphoglycerate mutase family. A-PGAM subfamily.

It carries out the reaction (2R)-2-phosphoglycerate = (2R)-3-phosphoglycerate. It participates in carbohydrate degradation; glycolysis; pyruvate from D-glyceraldehyde 3-phosphate: step 3/5. Catalyzes the interconversion of 2-phosphoglycerate and 3-phosphoglycerate. The polypeptide is 2,3-bisphosphoglycerate-independent phosphoglycerate mutase (Methanosarcina barkeri (strain Fusaro / DSM 804)).